Here is a 368-residue protein sequence, read N- to C-terminus: C-glycoside deglycosidase alpha subunit (368 aa).

Glu-145 provides a ligand contact to a divalent metal cation. The Proton acceptor role is filled by His-147. The a divalent metal cation site is built by Asp-177, His-275, and Glu-311.

The protein belongs to the C-glycoside deglycosidase alpha subunit family. In terms of assembly, heterodimer composed of an alpha subunit (CarB) and a beta subunit (CarC). A divalent metal cation is required as a cofactor.

It catalyses the reaction 3''-dehydroisovitexin = 1,5-anhydro-D-erythro-hex-1-en-3-ulose + apigenin. The enzyme catalyses 3''-dehydroisoorientin = 1,5-anhydro-D-erythro-hex-1-en-3-ulose + luteolin. Functionally, carbon-carbon bond-cleaving enzyme which participates in the metabolism of C-glycosides. Acts on the C6-glycosylated compounds 3''-dehydroisovitexin (3''-oxo-isovitexin) and 3''-dehydroisoorientin (3''-oxo-homoorientin). Shows weak activity with 3'-dehydromangiferin (3'-oxo-mangiferin). This chain is C-glycoside deglycosidase alpha subunit, found in Microbacterium trichothecenolyticum (Aureobacterium trichothecenolyticum).